The sequence spans 660 residues: Threonine--tRNA ligase (660 aa).

The TGS domain maps to 1–49; the sequence is MPDSIVHVKKGQRFLDVIKDKNVVAVKIDSVLHDLRDVAERDVDAIPVS. Positions 225–554 are catalytic; that stretch reads DHRRIIAEMD…LLEHYAGKLP (330 aa). Residues C318, H369, and H531 each coordinate Zn(2+).

This sequence belongs to the class-II aminoacyl-tRNA synthetase family. As to quaternary structure, homodimer. The cofactor is Zn(2+).

The protein localises to the cytoplasm. It carries out the reaction tRNA(Thr) + L-threonine + ATP = L-threonyl-tRNA(Thr) + AMP + diphosphate + H(+). Catalyzes the attachment of threonine to tRNA(Thr) in a two-step reaction: L-threonine is first activated by ATP to form Thr-AMP and then transferred to the acceptor end of tRNA(Thr). This is Threonine--tRNA ligase from Thermoplasma acidophilum (strain ATCC 25905 / DSM 1728 / JCM 9062 / NBRC 15155 / AMRC-C165).